Consider the following 257-residue polypeptide: tRNA (guanine-N(1)-)-methyltransferase (257 aa).

S-adenosyl-L-methionine contacts are provided by residues Gly-113 and 133 to 138 (IGDYVL).

The protein belongs to the RNA methyltransferase TrmD family. In terms of assembly, homodimer.

The protein resides in the cytoplasm. It catalyses the reaction guanosine(37) in tRNA + S-adenosyl-L-methionine = N(1)-methylguanosine(37) in tRNA + S-adenosyl-L-homocysteine + H(+). Its function is as follows. Specifically methylates guanosine-37 in various tRNAs. The protein is tRNA (guanine-N(1)-)-methyltransferase of Cronobacter sakazakii (strain ATCC BAA-894) (Enterobacter sakazakii).